Consider the following 253-residue polypeptide: GTP cyclohydrolase 1 type 2 homolog (253 aa).

Positions 64, 65, 101, 222, and 226 each coordinate a divalent metal cation.

It belongs to the GTP cyclohydrolase I type 2/NIF3 family. Homohexamer.

The polypeptide is GTP cyclohydrolase 1 type 2 homolog (Halobacterium salinarum (strain ATCC 700922 / JCM 11081 / NRC-1) (Halobacterium halobium)).